The chain runs to 131 residues: Large ribosomal subunit protein bL19 (131 aa).

The protein belongs to the bacterial ribosomal protein bL19 family.

Its function is as follows. This protein is located at the 30S-50S ribosomal subunit interface and may play a role in the structure and function of the aminoacyl-tRNA binding site. The sequence is that of Large ribosomal subunit protein bL19 from Rhodopseudomonas palustris (strain HaA2).